The following is a 144-amino-acid chain: Ribonuclease VapC1 (144 aa).

The PINc domain maps to 6–132 (VFVDGNVIVD…SFYSPDIEVL (127 aa)). Mg(2+)-binding residues include D9 and D102.

It belongs to the PINc/VapC protein family. The cofactor is Mg(2+).

Toxic component of a type II toxin-antitoxin (TA) system. An RNase. The polypeptide is Ribonuclease VapC1 (Aquifex aeolicus (strain VF5)).